We begin with the raw amino-acid sequence, 126 residues long: Putative phosphotransferase enzyme IIB component UU178 (126 aa).

Residues Leu-11–Ala-31 form a helical membrane-spanning segment. In terms of domain architecture, PTS EIIB type-1 spans Pro-49–Ser-126.

This sequence to M.genitalium MG129 and M.pneumoniae MPN268.

Its subcellular location is the membrane. In terms of biological role, the phosphoenolpyruvate-dependent sugar phosphotransferase system (PTS), a major carbohydrate active -transport system, catalyzes the phosphorylation of incoming sugar substrates concomitant with their translocation across the cell membrane. This chain is Putative phosphotransferase enzyme IIB component UU178, found in Ureaplasma parvum serovar 3 (strain ATCC 700970).